We begin with the raw amino-acid sequence, 282 residues long: Protoheme IX farnesyltransferase (282 aa).

8 helical membrane-spanning segments follow: residues 40-60 (LVLASLSMFLSIAGTTGFNMV), 87-107 (AVLASSAALAAGLAAGVAVNP), 108-128 (YVFVAGLLGFLIDIAVYTVLL), 135-157 (SVVFGGFAGGMPALGGWAAATGG), 162-184 (GVLLMLLVAVWSSLHIWTLSTYY), 204-224 (AGVVASLAAAVAVFLVAFLAF), 228-248 (LISAVGFAVAAVPLVLAVAVL), and 261-281 (AYRAFKLVNIFMGLFFVLLVL).

The protein belongs to the UbiA prenyltransferase family. Protoheme IX farnesyltransferase subfamily.

The protein localises to the cell membrane. It carries out the reaction heme b + (2E,6E)-farnesyl diphosphate + H2O = Fe(II)-heme o + diphosphate. It participates in porphyrin-containing compound metabolism; heme O biosynthesis; heme O from protoheme: step 1/1. Functionally, converts heme B (protoheme IX) to heme O by substitution of the vinyl group on carbon 2 of heme B porphyrin ring with a hydroxyethyl farnesyl side group. The sequence is that of Protoheme IX farnesyltransferase from Thermofilum pendens (strain DSM 2475 / Hrk 5).